We begin with the raw amino-acid sequence, 273 residues long: 4-hydroxy-tetrahydrodipicolinate reductase (273 aa).

NAD(+) is bound by residues 8–13 (GAAGRM), E34, 102–104 (GTT), and 128–131 (SSNM). H160 serves as the catalytic Proton donor/acceptor. H161 is a (S)-2,3,4,5-tetrahydrodipicolinate binding site. K164 functions as the Proton donor in the catalytic mechanism. 170–171 (GT) contacts (S)-2,3,4,5-tetrahydrodipicolinate.

It belongs to the DapB family.

It localises to the cytoplasm. It catalyses the reaction (S)-2,3,4,5-tetrahydrodipicolinate + NAD(+) + H2O = (2S,4S)-4-hydroxy-2,3,4,5-tetrahydrodipicolinate + NADH + H(+). The catalysed reaction is (S)-2,3,4,5-tetrahydrodipicolinate + NADP(+) + H2O = (2S,4S)-4-hydroxy-2,3,4,5-tetrahydrodipicolinate + NADPH + H(+). It participates in amino-acid biosynthesis; L-lysine biosynthesis via DAP pathway; (S)-tetrahydrodipicolinate from L-aspartate: step 4/4. In terms of biological role, catalyzes the conversion of 4-hydroxy-tetrahydrodipicolinate (HTPA) to tetrahydrodipicolinate. This chain is 4-hydroxy-tetrahydrodipicolinate reductase, found in Methanobrevibacter smithii (strain ATCC 35061 / DSM 861 / OCM 144 / PS).